The chain runs to 420 residues: Glucose-1-phosphate adenylyltransferase (420 aa).

Alpha-D-glucose 1-phosphate contacts are provided by residues Y107, G173, 188–189, and S206; that span reads EK.

Belongs to the bacterial/plant glucose-1-phosphate adenylyltransferase family. In terms of assembly, homotetramer.

The enzyme catalyses alpha-D-glucose 1-phosphate + ATP + H(+) = ADP-alpha-D-glucose + diphosphate. The protein operates within glycan biosynthesis; glycogen biosynthesis. Its function is as follows. Involved in the biosynthesis of ADP-glucose, a building block required for the elongation reactions to produce glycogen. Catalyzes the reaction between ATP and alpha-D-glucose 1-phosphate (G1P) to produce pyrophosphate and ADP-Glc. This chain is Glucose-1-phosphate adenylyltransferase, found in Shewanella baltica (strain OS155 / ATCC BAA-1091).